A 308-amino-acid polypeptide reads, in one-letter code: MQQVAIIGSGNIGTDLLIKIKRRSESLSVAAMVGIDPESDGLARARRLGVATTSDGVAGLLAMPEFEQAGIVLDATSANAHRANAAALAPYGRRLIDLTPAALGPFVVPAVNLDEHLSAPNVNMTTCGGQATVPIVAAISRVTPVAYAEIVATVASKSAGPGTRANIDEFTETTAHALESVGGARRGKAIIILNPAEPPLIMRDTVLCLVGDVDRDAVTESIHRMIADVAAYVPGYRLKQDVQFTPVDPAEMRILLPDDTVDVRWKVSVFLEVEGAAHYLPAYAGNLDIMTSAAVRVAERIAGAEVTA.

9-12 (SGNI) is an NAD(+) binding site. Cys127 (acyl-thioester intermediate) is an active-site residue. NAD(+) contacts are provided by residues 158-166 (SAGPGTRAN) and Asn286.

The protein belongs to the acetaldehyde dehydrogenase family.

The enzyme catalyses acetaldehyde + NAD(+) + CoA = acetyl-CoA + NADH + H(+). This Parafrankia sp. (strain EAN1pec) protein is Acetaldehyde dehydrogenase 2.